Consider the following 465-residue polypeptide: MKMPQTIGVVHFVGIGGIGMSGIAEVLHTLGYHVQGSDQAENANVVRLREKGIKAFIGHAAENLGDAEVVVISSAIKRDNPEYVAARERHLPIVRRAEMLAELMRFRQAVAIGGTHGKTTTTSMVAALLDAGGLDPTVINGGIINVYGTNARMGEGDWMVVEADESDGTFLKLPADIAVITNIDPEHLDHYGSFDKVREAFRQFVENVPFYGLGVMCIDHPEVQALVSRIEDRRVVTYGENLQADVRFENHRMENGHSVFDVIIRARKSDAVKAMRDLRLPMPGRHNVSNATAAIAVANELGMGEEAIRKGLAAFGGVKRRFTLTGTWNGISIFDDYGHHPVEIRAVLKAAREATSGRIIAIAQPHRYTRLRDLFDEFSACFNDADTVLVAPVYAAGESPIAGISSEALVASLRAAGHRDARFIPGPEAIAPIVREAANEGDFVVFLGAGNITQWAYALPKELCS.

An ATP-binding site is contributed by 114 to 120; sequence GTHGKTT.

Belongs to the MurCDEF family.

It is found in the cytoplasm. It catalyses the reaction UDP-N-acetyl-alpha-D-muramate + L-alanine + ATP = UDP-N-acetyl-alpha-D-muramoyl-L-alanine + ADP + phosphate + H(+). Its pathway is cell wall biogenesis; peptidoglycan biosynthesis. Functionally, cell wall formation. This chain is UDP-N-acetylmuramate--L-alanine ligase, found in Chelativorans sp. (strain BNC1).